Here is a 271-residue protein sequence, read N- to C-terminus: Type III pantothenate kinase (271 aa).

Position 6 to 13 (Asp-6 to Val-13) interacts with ATP. A substrate-binding site is contributed by Gly-109–Arg-112. Asp-111 (proton acceptor) is an active-site residue. A K(+)-binding site is contributed by Asp-131. An ATP-binding site is contributed by Ser-134. Residue Thr-186 coordinates substrate.

Belongs to the type III pantothenate kinase family. Homodimer. NH4(+) serves as cofactor. Requires K(+) as cofactor.

The protein resides in the cytoplasm. It carries out the reaction (R)-pantothenate + ATP = (R)-4'-phosphopantothenate + ADP + H(+). Its pathway is cofactor biosynthesis; coenzyme A biosynthesis; CoA from (R)-pantothenate: step 1/5. Catalyzes the phosphorylation of pantothenate (Pan), the first step in CoA biosynthesis. This chain is Type III pantothenate kinase, found in Mycolicibacterium smegmatis (strain ATCC 700084 / mc(2)155) (Mycobacterium smegmatis).